The primary structure comprises 388 residues: Succinate--CoA ligase [ADP-forming] subunit beta (388 aa).

One can recognise an ATP-grasp domain in the interval 9–244 (KQLFAEYGLP…PSQDDPREAH (236 aa)). ATP contacts are provided by residues lysine 46, 53-55 (GRG), glutamate 99, threonine 102, and glutamate 107. Residues asparagine 199 and aspartate 213 each contribute to the Mg(2+) site. Substrate-binding positions include asparagine 264 and 321 to 323 (GIV).

The protein belongs to the succinate/malate CoA ligase beta subunit family. In terms of assembly, heterotetramer of two alpha and two beta subunits. It depends on Mg(2+) as a cofactor.

The enzyme catalyses succinate + ATP + CoA = succinyl-CoA + ADP + phosphate. It catalyses the reaction GTP + succinate + CoA = succinyl-CoA + GDP + phosphate. Its pathway is carbohydrate metabolism; tricarboxylic acid cycle; succinate from succinyl-CoA (ligase route): step 1/1. Functionally, succinyl-CoA synthetase functions in the citric acid cycle (TCA), coupling the hydrolysis of succinyl-CoA to the synthesis of either ATP or GTP and thus represents the only step of substrate-level phosphorylation in the TCA. The beta subunit provides nucleotide specificity of the enzyme and binds the substrate succinate, while the binding sites for coenzyme A and phosphate are found in the alpha subunit. This is Succinate--CoA ligase [ADP-forming] subunit beta from Pseudomonas fluorescens (strain SBW25).